The chain runs to 401 residues: Mannonate dehydratase (401 aa).

Belongs to the mannonate dehydratase family. Requires Fe(2+) as cofactor. The cofactor is Mn(2+).

It catalyses the reaction D-mannonate = 2-dehydro-3-deoxy-D-gluconate + H2O. Its pathway is carbohydrate metabolism; pentose and glucuronate interconversion. Catalyzes the dehydration of D-mannonate. This is Mannonate dehydratase from Brucella canis (strain ATCC 23365 / NCTC 10854 / RM-666).